We begin with the raw amino-acid sequence, 879 residues long: Phosphoenolpyruvate carboxylase (879 aa).

Residues histidine 138 and lysine 545 contribute to the active site.

This sequence belongs to the PEPCase type 1 family. Mg(2+) is required as a cofactor.

It carries out the reaction oxaloacetate + phosphate = phosphoenolpyruvate + hydrogencarbonate. Forms oxaloacetate, a four-carbon dicarboxylic acid source for the tricarboxylic acid cycle. This is Phosphoenolpyruvate carboxylase from Histophilus somni (strain 2336) (Haemophilus somnus).